A 732-amino-acid chain; its full sequence is DNA-directed RNA polymerase subunit beta' (732 aa).

Cys70, Cys72, Cys85, and Cys88 together coordinate Zn(2+). Residues Asp575, Asp577, and Asp579 each contribute to the Mg(2+) site.

It belongs to the RNA polymerase beta' chain family. RpoC1 subfamily. As to quaternary structure, in plastids the minimal PEP RNA polymerase catalytic core is composed of four subunits: alpha, beta, beta', and beta''. When a (nuclear-encoded) sigma factor is associated with the core the holoenzyme is formed, which can initiate transcription. The cofactor is Mg(2+). It depends on Zn(2+) as a cofactor.

It is found in the plastid. The protein resides in the chloroplast. The catalysed reaction is RNA(n) + a ribonucleoside 5'-triphosphate = RNA(n+1) + diphosphate. Its function is as follows. DNA-dependent RNA polymerase catalyzes the transcription of DNA into RNA using the four ribonucleoside triphosphates as substrates. The polypeptide is DNA-directed RNA polymerase subunit beta' (Thalassiosira pseudonana (Marine diatom)).